The following is a 217-amino-acid chain: Urease accessory protein UreG (217 aa).

Residues 1-18 (MNAPHHPAHSTVRTKKLP) show a composition bias toward basic residues. Residues 1–24 (MNAPHHPAHSTVRTKKLPPLRVGV) form a disordered region. Residue 26-33 (GPVGSGKT) participates in GTP binding.

It belongs to the SIMIBI class G3E GTPase family. UreG subfamily. In terms of assembly, homodimer. UreD, UreF and UreG form a complex that acts as a GTP-hydrolysis-dependent molecular chaperone, activating the urease apoprotein by helping to assemble the nickel containing metallocenter of UreC. The UreE protein probably delivers the nickel.

Its subcellular location is the cytoplasm. Facilitates the functional incorporation of the urease nickel metallocenter. This process requires GTP hydrolysis, probably effectuated by UreG. This chain is Urease accessory protein UreG, found in Paraburkholderia xenovorans (strain LB400).